The chain runs to 304 residues: Glycine--tRNA ligase alpha subunit (304 aa).

Belongs to the class-II aminoacyl-tRNA synthetase family. In terms of assembly, tetramer of two alpha and two beta subunits.

It is found in the cytoplasm. It carries out the reaction tRNA(Gly) + glycine + ATP = glycyl-tRNA(Gly) + AMP + diphosphate. In Afipia carboxidovorans (strain ATCC 49405 / DSM 1227 / KCTC 32145 / OM5) (Oligotropha carboxidovorans), this protein is Glycine--tRNA ligase alpha subunit.